We begin with the raw amino-acid sequence, 99 residues long: Aspartyl/glutamyl-tRNA(Asn/Gln) amidotransferase subunit C (99 aa).

This sequence belongs to the GatC family. In terms of assembly, heterotrimer of A, B and C subunits.

It catalyses the reaction L-glutamyl-tRNA(Gln) + L-glutamine + ATP + H2O = L-glutaminyl-tRNA(Gln) + L-glutamate + ADP + phosphate + H(+). The catalysed reaction is L-aspartyl-tRNA(Asn) + L-glutamine + ATP + H2O = L-asparaginyl-tRNA(Asn) + L-glutamate + ADP + phosphate + 2 H(+). In terms of biological role, allows the formation of correctly charged Asn-tRNA(Asn) or Gln-tRNA(Gln) through the transamidation of misacylated Asp-tRNA(Asn) or Glu-tRNA(Gln) in organisms which lack either or both of asparaginyl-tRNA or glutaminyl-tRNA synthetases. The reaction takes place in the presence of glutamine and ATP through an activated phospho-Asp-tRNA(Asn) or phospho-Glu-tRNA(Gln). The polypeptide is Aspartyl/glutamyl-tRNA(Asn/Gln) amidotransferase subunit C (Albidiferax ferrireducens (strain ATCC BAA-621 / DSM 15236 / T118) (Rhodoferax ferrireducens)).